The following is a 132-amino-acid chain: Small ribosomal subunit protein uS8 (132 aa).

The protein belongs to the universal ribosomal protein uS8 family. In terms of assembly, part of the 30S ribosomal subunit. Contacts proteins S5 and S12.

Functionally, one of the primary rRNA binding proteins, it binds directly to 16S rRNA central domain where it helps coordinate assembly of the platform of the 30S subunit. In Bacillus pumilus (strain SAFR-032), this protein is Small ribosomal subunit protein uS8.